The primary structure comprises 187 residues: Elongation factor P (187 aa).

This sequence belongs to the elongation factor P family.

The protein resides in the cytoplasm. It functions in the pathway protein biosynthesis; polypeptide chain elongation. Its function is as follows. Involved in peptide bond synthesis. Stimulates efficient translation and peptide-bond synthesis on native or reconstituted 70S ribosomes in vitro. Probably functions indirectly by altering the affinity of the ribosome for aminoacyl-tRNA, thus increasing their reactivity as acceptors for peptidyl transferase. The sequence is that of Elongation factor P from Rhizorhabdus wittichii (strain DSM 6014 / CCUG 31198 / JCM 15750 / NBRC 105917 / EY 4224 / RW1) (Sphingomonas wittichii).